We begin with the raw amino-acid sequence, 219 residues long: MSSKLPTTLLRRPSALPSTTTYTAYSASRPTPPSCTAHGAQGQQIRNATFVPRHRRPYQFTQLVQLSDGSTFTVRTTMPTALYKSAKDSRNHLLWQPSDKSLKNVELDEAGKLAAFRERYGRGWDLDAKMTPEEEAAAAAALAAGGGAGVPGGKAAKKAAEEALLAKKKKEEEEAAKKAAEAEEADPFDSLTDLISGYATENMNPGLNFKETRHYGKKK.

2 stretches are compositionally biased toward basic and acidic residues: residues 169-181 (KKEE…KAAE) and 210-219 (KETRHYGKKK). Disordered regions lie at residues 169–188 (KKEE…ADPF) and 200–219 (TENM…GKKK).

This sequence belongs to the bacterial ribosomal protein bL31 family. Highly divergent. Component of the mitochondrial large ribosomal subunit (mt-LSU). Mature N.crassa 74S mitochondrial ribosomes consist of a small (37S) and a large (54S) subunit. The 37S small subunit contains a 16S ribosomal RNA (16S mt-rRNA) and 32 different proteins. The 54S large subunit contains a 23S rRNA (23S mt-rRNA) and 42 different proteins. bL31m bridges the mt-LSU central protuberance and the mt-SSU head.

It localises to the mitochondrion. In terms of biological role, component of the mitochondrial ribosome (mitoribosome), a dedicated translation machinery responsible for the synthesis of mitochondrial genome-encoded proteins, including at least some of the essential transmembrane subunits of the mitochondrial respiratory chain. The mitoribosomes are attached to the mitochondrial inner membrane and translation products are cotranslationally integrated into the membrane. The chain is Large ribosomal subunit protein bL31m (mrpl36) from Neurospora crassa (strain ATCC 24698 / 74-OR23-1A / CBS 708.71 / DSM 1257 / FGSC 987).